A 212-amino-acid chain; its full sequence is ATP-dependent Clp protease proteolytic subunit (212 aa).

Ser114 functions as the Nucleophile in the catalytic mechanism. Residue His139 is part of the active site.

It belongs to the peptidase S14 family. In terms of assembly, fourteen ClpP subunits assemble into 2 heptameric rings which stack back to back to give a disk-like structure with a central cavity, resembling the structure of eukaryotic proteasomes.

Its subcellular location is the cytoplasm. The enzyme catalyses Hydrolysis of proteins to small peptides in the presence of ATP and magnesium. alpha-casein is the usual test substrate. In the absence of ATP, only oligopeptides shorter than five residues are hydrolyzed (such as succinyl-Leu-Tyr-|-NHMec, and Leu-Tyr-Leu-|-Tyr-Trp, in which cleavage of the -Tyr-|-Leu- and -Tyr-|-Trp bonds also occurs).. Functionally, cleaves peptides in various proteins in a process that requires ATP hydrolysis. Has a chymotrypsin-like activity. Plays a major role in the degradation of misfolded proteins. The chain is ATP-dependent Clp protease proteolytic subunit from Laribacter hongkongensis (strain HLHK9).